A 1222-amino-acid chain; its full sequence is Kinesin-related protein 9 (1222 aa).

Residues 1–25 (MDNNNNNFSTPKQPTINSTTGGQLR) show a composition bias toward polar residues. Disordered regions lie at residues 1–55 (MDNN…ITNS), 75–165 (MDSL…STNI), and 188–343 (SSNT…TQPL). A compositionally biased stretch (low complexity) spans 26–55 (SRSNSSPSTSSISTPRNGSTTATTSSITNS). The span at 75 to 85 (MDSLSTPMSQS) shows a compositional bias: polar residues. Composition is skewed to low complexity over residues 122-165 (SFIS…STNI), 194-209 (SSLPSSTNNGNNPLSN), 216-238 (NHHLVNSNSSTSTPSPTMFISTT), and 254-325 (NLTT…RTPI). Over residues 326 to 343 (QNFNSVGGVNITSKTQPL) the composition is skewed to polar residues. In terms of domain architecture, Kinesin motor spans 350 to 719 (SIQAVCRFRP…LNFGQRAQSV (370 aa)). 438 to 445 (GQTGAGKT) contributes to the ATP binding site. The stretch at 724-1026 (LQNVEESHSE…DTLTNKLEIQ (303 aa)) forms a coiled coil. The interval 1144 to 1174 (NINNNNNIKNNNNNNKLKSKKVGSSSSSSSN) is disordered. The helical transmembrane segment at 1183–1203 (ILFFLIILVILFFLMVAVGLT) threads the bilayer.

This sequence belongs to the TRAFAC class myosin-kinesin ATPase superfamily. Kinesin family.

Its subcellular location is the membrane. It localises to the cytoplasm. The protein localises to the cytoskeleton. Its function is as follows. Microtubule-associated force-producing protein that plays a role in organelle transport. Its motor activity is directed toward the microtubule's plus end. This is Kinesin-related protein 9 (kif9) from Dictyostelium discoideum (Social amoeba).